The chain runs to 37 residues: uncharacterized protein (37 aa).

A helical transmembrane segment spans residues 16–36 (FALIVVLFILLIIVGTAFVGG).

It belongs to the SscA family.

It localises to the membrane. This is an uncharacterized protein from Bacillus subtilis (strain 168).